The following is a 524-amino-acid chain: RNA-splicing ligase RtcB homolog 2 (524 aa).

Residues Asp-141, Cys-144, His-249, His-281, and His-372 each contribute to the Mn(2+) site. Residue 248–252 (NHYLE) participates in GMP binding. Residues 372 to 373 (HN), 421 to 424 (GGSM), Ser-428, 447 to 450 (HGAG), and Lys-523 each bind GMP. His-447 functions as the GMP-histidine intermediate in the catalytic mechanism.

The protein belongs to the RtcB family. As to quaternary structure, catalytic component of the tRNA-splicing ligase complex. Mn(2+) is required as a cofactor.

It carries out the reaction a 3'-end 3'-phospho-ribonucleotide-RNA + a 5'-end dephospho-ribonucleoside-RNA + GTP = a ribonucleotidyl-ribonucleotide-RNA + GMP + diphosphate. It catalyses the reaction a 3'-end 2',3'-cyclophospho-ribonucleotide-RNA + a 5'-end dephospho-ribonucleoside-RNA + GTP + H2O = a ribonucleotidyl-ribonucleotide-RNA + GMP + diphosphate + H(+). In terms of biological role, catalytic subunit of the tRNA-splicing ligase complex that acts by directly joining spliced tRNA halves to mature-sized tRNAs by incorporating the precursor-derived splice junction phosphate into the mature tRNA as a canonical 3',5'-phosphodiester. May act as an RNA ligase with broad substrate specificity, and may function toward other RNAs. This chain is RNA-splicing ligase RtcB homolog 2, found in Entamoeba dispar (strain ATCC PRA-260 / SAW760).